A 757-amino-acid chain; its full sequence is Polyribonucleotide nucleotidyltransferase (757 aa).

Asp482 and Asp488 together coordinate Mg(2+). Residues 549 to 608 (PRMLSFYIDKDKISAAIGSKGKNIRSVCERSNAKIEIGDDGKVSVFATSGTEAEIAKSMM) form the KH domain. Positions 618–686 (GSIVDVKVVR…KGGCPKLSRR (69 aa)) constitute an S1 motif domain. Residues 698-757 (GELYNEERKDGPNDRDNYYNNSFSRKPGGSHHKRPPRPHSGFSNRNRPKFGNNDSSSGFY) are disordered. Over residues 702–714 (NEERKDGPNDRDN) the composition is skewed to basic and acidic residues. Basic residues predominate over residues 725–734 (GGSHHKRPPR).

Belongs to the polyribonucleotide nucleotidyltransferase family. The cofactor is Mg(2+).

It localises to the cytoplasm. It catalyses the reaction RNA(n+1) + phosphate = RNA(n) + a ribonucleoside 5'-diphosphate. In terms of biological role, involved in mRNA degradation. Catalyzes the phosphorolysis of single-stranded polyribonucleotides processively in the 3'- to 5'-direction. This is Polyribonucleotide nucleotidyltransferase from Wolbachia pipientis wMel.